A 111-amino-acid chain; its full sequence is Nucleoid-associated protein VF_1686 (111 aa).

Disordered regions lie at residues 1 to 23 and 89 to 111; these read MFGG…DRMQ and TQKE…KMPF.

This sequence belongs to the YbaB/EbfC family. Homodimer.

The protein localises to the cytoplasm. The protein resides in the nucleoid. Binds to DNA and alters its conformation. May be involved in regulation of gene expression, nucleoid organization and DNA protection. The chain is Nucleoid-associated protein VF_1686 from Aliivibrio fischeri (strain ATCC 700601 / ES114) (Vibrio fischeri).